The following is a 165-amino-acid chain: Transcription antitermination protein NusB (165 aa).

The interval 139 to 165 (EAVRSHRRNKRPAADKPVATDKPAAAE) is disordered.

The protein belongs to the NusB family.

Involved in transcription antitermination. Required for transcription of ribosomal RNA (rRNA) genes. Binds specifically to the boxA antiterminator sequence of the ribosomal RNA (rrn) operons. The sequence is that of Transcription antitermination protein NusB from Laribacter hongkongensis (strain HLHK9).